The primary structure comprises 306 residues: D-alanine--D-alanine ligase B (306 aa).

Positions 101 to 303 (KLLWQGAGLP…FSQLVVRILE (203 aa)) constitute an ATP-grasp domain. ATP is bound at residue 134 to 189 (ISALGLPLIVKPSREGSSVGMTKVVEENALQGALSLAFQHDDEILIEKWLCGPEFT). Mg(2+) is bound by residues Asp257, Glu270, and Asn272.

This sequence belongs to the D-alanine--D-alanine ligase family. Monomer. Mg(2+) serves as cofactor. It depends on Mn(2+) as a cofactor.

It localises to the cytoplasm. The enzyme catalyses 2 D-alanine + ATP = D-alanyl-D-alanine + ADP + phosphate + H(+). It functions in the pathway cell wall biogenesis; peptidoglycan biosynthesis. Cell wall formation. This is D-alanine--D-alanine ligase B (ddlB) from Salmonella typhimurium (strain LT2 / SGSC1412 / ATCC 700720).